Here is a 323-residue protein sequence, read N- to C-terminus: tRNA N6-adenosine threonylcarbamoyltransferase (323 aa).

Residues H110 and H114 each coordinate Fe cation. Substrate-binding positions include 131-135 (VASGG), D164, G177, and N264. D288 is a Fe cation binding site.

It belongs to the KAE1 / TsaD family. Fe(2+) serves as cofactor.

Its subcellular location is the cytoplasm. The catalysed reaction is L-threonylcarbamoyladenylate + adenosine(37) in tRNA = N(6)-L-threonylcarbamoyladenosine(37) in tRNA + AMP + H(+). In terms of biological role, required for the formation of a threonylcarbamoyl group on adenosine at position 37 (t(6)A37) in tRNAs that read codons beginning with adenine. Is involved in the transfer of the threonylcarbamoyl moiety of threonylcarbamoyl-AMP (TC-AMP) to the N6 group of A37, together with TsaE and TsaB. TsaD likely plays a direct catalytic role in this reaction. The chain is tRNA N6-adenosine threonylcarbamoyltransferase from Thermus thermophilus (strain ATCC BAA-163 / DSM 7039 / HB27).